The following is a 258-amino-acid chain: Pimeloyl-[acyl-carrier protein] methyl ester esterase (258 aa).

Residues 16–242 (LVLLHGWGLN…AAHAPFISHP (227 aa)) form the AB hydrolase-1 domain. Residues tryptophan 22, 82–83 (SM), and 143–147 (FLALQ) contribute to the substrate site. Serine 82 acts as the Nucleophile in catalysis. Catalysis depends on residues aspartate 207 and histidine 235. Histidine 235 contributes to the substrate binding site.

This sequence belongs to the AB hydrolase superfamily. Carboxylesterase BioH family. In terms of assembly, monomer.

It is found in the cytoplasm. The enzyme catalyses 6-carboxyhexanoyl-[ACP] methyl ester + H2O = 6-carboxyhexanoyl-[ACP] + methanol + H(+). It participates in cofactor biosynthesis; biotin biosynthesis. Functionally, the physiological role of BioH is to remove the methyl group introduced by BioC when the pimeloyl moiety is complete. It allows to synthesize pimeloyl-ACP via the fatty acid synthetic pathway through the hydrolysis of the ester bonds of pimeloyl-ACP esters. The protein is Pimeloyl-[acyl-carrier protein] methyl ester esterase of Yersinia pseudotuberculosis serotype O:1b (strain IP 31758).